Consider the following 396-residue polypeptide: Lysophospholipid transporter LplT (396 aa).

At 1–17 the chain is on the periplasmic side; that stretch reads MSESVHTNTSLWSKGMK. The helical transmembrane segment at 18 to 38 threads the bilayer; it reads AVIVAQFLSAFGDNALLFATL. Residues 39–52 lie on the Cytoplasmic side of the membrane; the sequence is ALLKAQFYPEWSQP. Residues 53-73 form a helical membrane-spanning segment; sequence ILQMVFVGAYILLAPFVGQVA. Residues 74-90 lie on the Periplasmic side of the membrane; sequence DSFAKGRVMMFANGLKL. The chain crosses the membrane as a helical span at residues 91–111; it reads LGAASICFGINPFLGYTLVGV. Over 112-144 the chain is Cytoplasmic; the sequence is GAAAYSPAKYGILGELTTGSKLVKANGLMEASA. A helical membrane pass occupies residues 145 to 165; the sequence is IAAILLGSVAGGVLADWHVLV. Position 166 (Ala166) is a topological domain, periplasmic. A helical transmembrane segment spans residues 167–187; sequence LAACALAYGGAVVANIYIPKL. At 188 to 225 the chain is on the cytoplasmic side; it reads AARPGQSWNLINMTRSFLNACTSLWCNGETRFSLVGAS. The chain crosses the membrane as a helical span at residues 226-246; it reads LFWGAGVTLRFLLVLWVPVAL. The Periplasmic segment spans residues 247–255; that stretch reads GITDNATPT. The chain crosses the membrane as a helical span at residues 256–276; sequence YLNAMVAIGIVVGAGAAAKLV. The Cytoplasmic segment spans residues 277–279; the sequence is TLE. Residues 280–300 traverse the membrane as a helical segment; it reads TVSRCMPAGILIGVVVLIFSL. Over 301–303 the chain is Periplasmic; that stretch reads QHE. The helical transmembrane segment at 304 to 324 threads the bilayer; sequence LLPAYALLMLIGVLGGFFVVP. At 325–342 the chain is on the cytoplasmic side; it reads LNALLQERGKKSVGAGNA. A helical membrane pass occupies residues 343–363; it reads IAVQNLGENSAMLLMLGIYSL. At 364 to 365 the chain is on the periplasmic side; it reads AV. A helical membrane pass occupies residues 366-386; it reads MVGIPVVPIGIGFGALFALAI. At 387-396 the chain is on the cytoplasmic side; it reads TALWIWQRRH.

It belongs to the major facilitator superfamily. LplT (TC 2.A.1.42) family.

It localises to the cell inner membrane. Functionally, catalyzes the facilitated diffusion of 2-acyl-glycero-3-phosphoethanolamine (2-acyl-GPE) into the cell. This Shigella flexneri serotype 5b (strain 8401) protein is Lysophospholipid transporter LplT.